The following is a 132-amino-acid chain: Replication enhancer protein (132 aa).

Belongs to the geminiviridae replication enhancer protein family. Homooligomer. Interacts with the replication-associated protein (REP). Interacts with host proliferating cell nuclear antigen (PCNA). Interacts with host retinoblastoma-related protein 1 (RBR1), and may thereby deregulate the host cell cycle. Oligomerization and interaction with PCNA are necessary for optimal replication enhancement.

Increases viral DNA accumulation. Enhances infectivity and symptom expression. This Solanum lycopersicum (Tomato) protein is Replication enhancer protein.